Here is a 1273-residue protein sequence, read N- to C-terminus: DNA polymerase 037L (1273 aa).

Residues 679 to 837 (IRKNAITEEL…ENKSKEDIDE (159 aa)) are a coiled coil.

It belongs to the DNA polymerase type-B family.

The enzyme catalyses DNA(n) + a 2'-deoxyribonucleoside 5'-triphosphate = DNA(n+1) + diphosphate. Its function is as follows. DNA-directed DNA polymerase involved in viral DNA replication. The polypeptide is DNA polymerase 037L (DPOL) (Invertebrate iridescent virus 6 (IIV-6)).